Reading from the N-terminus, the 200-residue chain is Type 1 fimbriae regulatory protein FimB (200 aa).

In terms of domain architecture, Tyr recombinase spans 8 to 189 (KKRNFLTHSE…NAGRFYGIWD (182 aa)). Residues arginine 47, lysine 72, histidine 141, arginine 144, and histidine 167 contribute to the active site. Tyrosine 176 serves as the catalytic O-(3'-phospho-DNA)-tyrosine intermediate.

Belongs to the 'phage' integrase family.

In terms of biological role, fimB is one of the 2 regulatory proteins which control the phase variation of type 1 fimbriae in E.coli. These proteins mediate the periodic inversion of a 300bp DNA segment that harbors the promoter for the fimbrial structural gene, fimA. FimB switches fimA on. In Escherichia coli O157:H7, this protein is Type 1 fimbriae regulatory protein FimB (fimB).